Consider the following 214-residue polypeptide: Adenylate kinase (214 aa).

Residue 10-15 (GAGKGT) coordinates ATP. The segment at 30–59 (STGDMLRAAVKAGTPLGLEAKKVMDAGQLV) is NMP. Residues T31, R36, 57–59 (QLV), 85–88 (GFPR), and Q92 contribute to the AMP site. Residues 122-159 (GRRVHPGSGRVYHIVFNQPKVEGKDDVTGEDLAIRPDD) are LID. ATP contacts are provided by residues R123 and 132-133 (VY). Residues R156 and R167 each coordinate AMP. Q200 contributes to the ATP binding site.

The protein belongs to the adenylate kinase family. As to quaternary structure, monomer.

The protein localises to the cytoplasm. It carries out the reaction AMP + ATP = 2 ADP. Its pathway is purine metabolism; AMP biosynthesis via salvage pathway; AMP from ADP: step 1/1. Functionally, catalyzes the reversible transfer of the terminal phosphate group between ATP and AMP. Plays an important role in cellular energy homeostasis and in adenine nucleotide metabolism. This Shewanella piezotolerans (strain WP3 / JCM 13877) protein is Adenylate kinase.